The primary structure comprises 673 residues: FLYWCH-type zinc finger-containing protein 1 (673 aa).

The segment at 1–62 (MPLPEPSEQD…SSTATLPNNT (62 aa)) is disordered. Residue serine 21 is modified to Phosphoserine. Positions 47-62 (VASQETSSTATLPNNT) are enriched in polar residues. 2 consecutive FLYWCH-type zinc fingers follow at residues 92–150 (FLKT…DHCH) and 235–293 (FLKT…SHCH). Residue lysine 110 forms a Glycyl lysine isopeptide (Lys-Gly) (interchain with G-Cter in SUMO2) linkage. Over residues 147–158 (DHCHPPEKEGLD) the composition is skewed to basic and acidic residues. The disordered stretch occupies residues 147 to 178 (DHCHPPEKEGLDRKKRHRGRPPSSALPEGAEV). 2 positions are modified to phosphoserine: serine 294 and serine 339. The disordered stretch occupies residues 351-402 (LSRSKSKSKSKSRSKSKSKSRSRSRKRAKKQQESSQEPPEEDQDVDPRGPEF). Residues 354-379 (SKSKSKSKSRSKSKSKSRSRSRKRAK) show a composition bias toward basic residues. FLYWCH-type zinc fingers lie at residues 402-460 (FLKT…SHCH), 490-548 (FLKT…RHCH), and 581-639 (FLRT…SHCH). Positions 646–673 (LEALRQREKAPSAAKKKKKKKKKKKGIH) are disordered. Residues 659-673 (AKKKKKKKKKKKGIH) show a composition bias toward basic residues. Residue lysine 666 forms a Glycyl lysine isopeptide (Lys-Gly) (interchain with G-Cter in SUMO2) linkage.

Interacts with CTNNB1 (when unphosphorylated), perhaps preventing interaction of CTNNB1 with TCF4, and thereby regulating transcription activation; phosphorylation of CTNNB1 may inhibit the interaction.

Its subcellular location is the nucleus. It is found in the chromosome. The protein resides in the centromere. Transcription cofactor. Negatively regulates transcription activation by catenin beta-1 CTNNB1, perhaps acting by competing with TCF4 for CTNNB1 binding. May play a role in DNA-damage response signaling. Binds specifically to DNA sequences at peri-centromeric chromatin loci. This is FLYWCH-type zinc finger-containing protein 1 (Flywch1) from Mus musculus (Mouse).